A 64-amino-acid polypeptide reads, in one-letter code: Large ribosomal subunit protein bL35 (64 aa).

2 stretches are compositionally biased toward basic residues: residues 1–15 (MPKAKTHSGASKRFR) and 23–42 (VRQKANRRHLLEHKPTKRTR). The disordered stretch occupies residues 1–45 (MPKAKTHSGASKRFRTTGSGKVVRQKANRRHLLEHKPTKRTRRLD).

Belongs to the bacterial ribosomal protein bL35 family.

The chain is Large ribosomal subunit protein bL35 from Mycolicibacterium vanbaalenii (strain DSM 7251 / JCM 13017 / BCRC 16820 / KCTC 9966 / NRRL B-24157 / PYR-1) (Mycobacterium vanbaalenii).